A 734-amino-acid polypeptide reads, in one-letter code: Photosystem I P700 chlorophyll a apoprotein A2 (734 aa).

8 helical membrane passes run 46–69 (IFAS…FHVA), 135–158 (LYTG…LHLQ), 175–199 (LNHH…HVAI), 273–291 (MAHH…GHMY), 330–353 (IHFQ…QHMY), 369–395 (AALY…IFFI), 417–439 (AIIS…LYVH), and 517–535 (FLVH…LILV). [4Fe-4S] cluster contacts are provided by C559 and C568. The next 2 helical transmembrane spans lie at 575 to 596 (AFYL…YWHW) and 643 to 665 (LSVW…MFLI). Positions 654, 662, and 670 each coordinate chlorophyll a. A phylloquinone-binding site is contributed by W671. A helical membrane pass occupies residues 707–727 (LVGLAHFSVGYIFTYAAFLIA).

It belongs to the PsaA/PsaB family. In terms of assembly, the PsaA/B heterodimer binds the P700 chlorophyll special pair and subsequent electron acceptors. PSI consists of a core antenna complex that captures photons, and an electron transfer chain that converts photonic excitation into a charge separation. The eukaryotic PSI reaction center is composed of at least 11 subunits. It depends on P700 is a chlorophyll a/chlorophyll a' dimer, A0 is one or more chlorophyll a, A1 is one or both phylloquinones and FX is a shared 4Fe-4S iron-sulfur center. as a cofactor.

Its subcellular location is the plastid. The protein resides in the chloroplast thylakoid membrane. The enzyme catalyses reduced [plastocyanin] + hnu + oxidized [2Fe-2S]-[ferredoxin] = oxidized [plastocyanin] + reduced [2Fe-2S]-[ferredoxin]. Its function is as follows. PsaA and PsaB bind P700, the primary electron donor of photosystem I (PSI), as well as the electron acceptors A0, A1 and FX. PSI is a plastocyanin-ferredoxin oxidoreductase, converting photonic excitation into a charge separation, which transfers an electron from the donor P700 chlorophyll pair to the spectroscopically characterized acceptors A0, A1, FX, FA and FB in turn. Oxidized P700 is reduced on the lumenal side of the thylakoid membrane by plastocyanin. In Capsella bursa-pastoris (Shepherd's purse), this protein is Photosystem I P700 chlorophyll a apoprotein A2.